Consider the following 159-residue polypeptide: 2-C-methyl-D-erythritol 2,4-cyclodiphosphate synthase (159 aa).

Residues Asp-8 and His-10 each coordinate a divalent metal cation. 4-CDP-2-C-methyl-D-erythritol 2-phosphate-binding positions include 8–10 (DVH) and 34–35 (HS). His-42 serves as a coordination point for a divalent metal cation. 4-CDP-2-C-methyl-D-erythritol 2-phosphate is bound by residues 56-58 (DIG), 61-65 (FPDTD), 100-106 (AQEPKMA), 132-135 (TTTE), Phe-139, and Arg-142.

Belongs to the IspF family. In terms of assembly, homotrimer. A divalent metal cation is required as a cofactor.

It carries out the reaction 4-CDP-2-C-methyl-D-erythritol 2-phosphate = 2-C-methyl-D-erythritol 2,4-cyclic diphosphate + CMP. It participates in isoprenoid biosynthesis; isopentenyl diphosphate biosynthesis via DXP pathway; isopentenyl diphosphate from 1-deoxy-D-xylulose 5-phosphate: step 4/6. Involved in the biosynthesis of isopentenyl diphosphate (IPP) and dimethylallyl diphosphate (DMAPP), two major building blocks of isoprenoid compounds. Catalyzes the conversion of 4-diphosphocytidyl-2-C-methyl-D-erythritol 2-phosphate (CDP-ME2P) to 2-C-methyl-D-erythritol 2,4-cyclodiphosphate (ME-CPP) with a corresponding release of cytidine 5-monophosphate (CMP). This chain is 2-C-methyl-D-erythritol 2,4-cyclodiphosphate synthase, found in Alkaliphilus metalliredigens (strain QYMF).